Consider the following 419-residue polypeptide: G-protein coupled receptor 151 (419 aa).

At 1 to 41 (MLAAAFADSNSSSMNVSFAHLHFAGGYLPSDSQDWRTIIPA) the chain is on the extracellular side. Residues N10 and N15 are each glycosylated (N-linked (GlcNAc...) asparagine). A helical transmembrane segment spans residues 42-62 (LLVAVCLVGFVGNLCVIGILL). At 63 to 71 (HNAWKGKPS) the chain is on the cytoplasmic side. Residues 72-92 (MIHSLILNLSLADLSLLLFSA) traverse the membrane as a helical segment. Residues 93–116 (PIRATAYSKSVWDLGWFVCKSSDW) are Extracellular-facing. C111 and C187 form a disulfide bridge. Residues 117–137 (FIHTCMAAKSLTIVVVAKVCF) traverse the membrane as a helical segment. Residues 138 to 153 (MYASDPAKQVSIHNYT) lie on the Cytoplasmic side of the membrane. A helical transmembrane segment spans residues 154–174 (IWSVLVAIWTVASLLPLPEWF). The Extracellular portion of the chain corresponds to 175–201 (FSTIRHHEGVEMCLVDVPAVAEEFMSM). A helical membrane pass occupies residues 202–222 (FGKLYPLLAFGLPLFFASFYF). Topologically, residues 223 to 252 (WRAYDQCKKRGTKTQNLRNQIRSKQVTVML) are cytoplasmic. The chain crosses the membrane as a helical span at residues 253 to 273 (LSIAIISALLWLPEWVAWLWV). Residues 274 to 286 (WHLKAAGPAPPQG) lie on the Extracellular side of the membrane. Residues 287–307 (FIALSQVLMFSISSANPLIFL) traverse the membrane as a helical segment. Topologically, residues 308-419 (VMSEEFREGL…EDQETGEGVK (112 aa)) are cytoplasmic. The interval 330–419 (PTVSESQETP…EDQETGEGVK (90 aa)) is disordered. Positions 332–341 (VSESQETPAG) are enriched in polar residues. Positions 410–419 (EDQETGEGVK) are enriched in acidic residues.

The protein belongs to the G-protein coupled receptor 1 family. In terms of tissue distribution, high expression in the spinal cord.

It localises to the cell membrane. Proton-sensing G-protein coupled receptor. In Homo sapiens (Human), this protein is G-protein coupled receptor 151 (GPR151).